Here is a 364-residue protein sequence, read N- to C-terminus: S-adenosylmethionine:tRNA ribosyltransferase-isomerase (364 aa).

It belongs to the QueA family. In terms of assembly, monomer.

The protein resides in the cytoplasm. The catalysed reaction is 7-aminomethyl-7-carbaguanosine(34) in tRNA + S-adenosyl-L-methionine = epoxyqueuosine(34) in tRNA + adenine + L-methionine + 2 H(+). Its pathway is tRNA modification; tRNA-queuosine biosynthesis. Its function is as follows. Transfers and isomerizes the ribose moiety from AdoMet to the 7-aminomethyl group of 7-deazaguanine (preQ1-tRNA) to give epoxyqueuosine (oQ-tRNA). The protein is S-adenosylmethionine:tRNA ribosyltransferase-isomerase of Bradyrhizobium sp. (strain ORS 278).